We begin with the raw amino-acid sequence, 665 residues long: Golgi-associated RAB2B interactor protein 3 (665 aa).

3 disordered regions span residues 211–240 (EIRGEGDQNSRPQSSPTVSEATSAAFAGGE), 272–296 (AAAGTAGPAAGPAAGTAGPAAGTAG), and 480–590 (SEGY…GSVS). Positions 219–232 (NSRPQSSPTVSEAT) are enriched in polar residues. Over residues 499 to 513 (EAKEKRERREKDRTS) the composition is skewed to basic and acidic residues. 2 stretches are compositionally biased toward basic residues: residues 514–538 (SRKSSHHRRTGMSRHSSKDKSRKTS) and 554–566 (GHGRLRGKRHSSS). A Bipartite nuclear localization signal motif is present at residues 515–531 (RKSSHHRRTGMSRHSSK). Ser-652 carries the post-translational modification Phosphoserine.

The protein belongs to the GARIN family. As to quaternary structure, interacts (via N-terminus) with RAB2B (in GTP-bound form). Interacts with FRG1. As to expression, expressed in adult spermatocytes and spermatids.

The protein localises to the golgi apparatus. Its subcellular location is the nucleus. The protein resides in the cajal body. Its function is as follows. May be involved in RNA biogenesis. This Mus musculus (Mouse) protein is Golgi-associated RAB2B interactor protein 3.